We begin with the raw amino-acid sequence, 356 residues long: Nicotinate-nucleotide--dimethylbenzimidazole phosphoribosyltransferase (356 aa).

The Proton acceptor role is filled by Glu-317.

It belongs to the CobT family. As to quaternary structure, homodimer.

It carries out the reaction 5,6-dimethylbenzimidazole + nicotinate beta-D-ribonucleotide = alpha-ribazole 5'-phosphate + nicotinate + H(+). The protein operates within nucleoside biosynthesis; alpha-ribazole biosynthesis; alpha-ribazole from 5,6-dimethylbenzimidazole: step 1/2. Functionally, catalyzes the synthesis of alpha-ribazole-5'-phosphate from nicotinate mononucleotide (NAMN) and 5,6-dimethylbenzimidazole (DMB). The chain is Nicotinate-nucleotide--dimethylbenzimidazole phosphoribosyltransferase from Salmonella gallinarum (strain 287/91 / NCTC 13346).